A 34-amino-acid chain; its full sequence is DDIT3 upstream open reading frame protein (34 aa).

Interacts with DDIT3 (isoform 1).

It localises to the nucleus. The protein localises to the cytoplasm. Product of the upstream open reading frame (uORF) of DDIT3/CHOP that is specifically produced in absence of stress, thereby preventing translation of downstream stress effector DDIT3/CHOP. The protein is DDIT3 upstream open reading frame protein of Homo sapiens (Human).